The sequence spans 183 residues: 2-epi-5-epi-valiolone epimerase (183 aa).

The region spanning 11 to 155 (AVHHVAYTVP…WGMQLELINL (145 aa)) is the VOC domain. A divalent metal cation contacts are provided by His-14, Glu-76, His-99, and Glu-151.

As to quaternary structure, homodimer. The cofactor is a divalent metal cation.

The catalysed reaction is 2-epi-5-epi-valiolone = 5-epi-valiolone. It participates in antibiotic biosynthesis. Catalyzes the epimerization of 2-epi-5-epi-valiolone to 5-epi-valiolone. Involved in cetoniacytone A biosynthesis. The chain is 2-epi-5-epi-valiolone epimerase from Actinomyces sp.